The following is a 121-amino-acid chain: Small ribosomal subunit protein uS13 (121 aa).

The interval 91 to 121 (HRRGLPVRGQKTKNNARTRKGPVKTVANKKK) is disordered.

It belongs to the universal ribosomal protein uS13 family. Part of the 30S ribosomal subunit. Forms a loose heterodimer with protein S19. Forms two bridges to the 50S subunit in the 70S ribosome.

Functionally, located at the top of the head of the 30S subunit, it contacts several helices of the 16S rRNA. In the 70S ribosome it contacts the 23S rRNA (bridge B1a) and protein L5 of the 50S subunit (bridge B1b), connecting the 2 subunits; these bridges are implicated in subunit movement. Contacts the tRNAs in the A and P-sites. This Staphylococcus epidermidis (strain ATCC 35984 / DSM 28319 / BCRC 17069 / CCUG 31568 / BM 3577 / RP62A) protein is Small ribosomal subunit protein uS13.